Reading from the N-terminus, the 513-residue chain is Protein phosphatase 1H (513 aa).

S7 carries the phosphoserine modification. Positions 77–506 (ATGYAEVINA…DDISVYVIPL (430 aa)) constitute a PPM-type phosphatase domain. The segment at 110-133 (ITSTPNRNSKRRSSLPNGEGLQLK) is disordered. T113 bears the Phosphothreonine mark. A phosphoserine mark is found at S123 and S210. R212 is subject to Omega-N-methylarginine. Position 220 is a phosphoserine (S220). A Phosphothreonine modification is found at T223. At S421 the chain carries Phosphoserine.

The protein belongs to the PP2C family.

It localises to the nucleus. It is found in the cytoplasm. The catalysed reaction is O-phospho-L-seryl-[protein] + H2O = L-seryl-[protein] + phosphate. The enzyme catalyses O-phospho-L-threonyl-[protein] + H2O = L-threonyl-[protein] + phosphate. In terms of biological role, dephosphorylates CDKN1B at 'Thr-187', thus removing a signal for proteasomal degradation. The sequence is that of Protein phosphatase 1H (Ppm1h) from Rattus norvegicus (Rat).